Here is a 320-residue protein sequence, read N- to C-terminus: Mitochondrial thiamine pyrophosphate carrier 1 (320 aa).

Solcar repeat units lie at residues 12-110 (GTRR…TTQA), 119-205 (PQPV…LRPS), and 213-308 (PFGS…TLRA). The next 6 membrane-spanning stretches (helical) occupy residues 17–35 (VVLAGGIAGLVSRFCVAPL), 91–107 (LMYVCYGGVQFTTYRTT), 125–145 (FVAGASAGGLATAATYPLDLL), 180–197 (GCSAAVGQIVPYMGLFFA), 219–239 (ALAGMIASVLAKTGVFPLDLV), and 283–300 (GLTVSLFKAAPASAVTMW).

This sequence belongs to the mitochondrial carrier (TC 2.A.29) family.

The protein resides in the mitochondrion inner membrane. Mitochondrial transporter that mediates uptake of thiamine pyrophosphate (ThPP) into mitochondria. The chain is Mitochondrial thiamine pyrophosphate carrier 1 (tpc1) from Aspergillus terreus (strain NIH 2624 / FGSC A1156).